Here is a 75-residue protein sequence, read N- to C-terminus: Cytochrome c oxidase subunit 6C (75 aa).

The Mitochondrial matrix segment spans residues 1-13 (MASEVLVKPQMRG). Residues 14–54 (LLARRLRIHMVGAFLVSLGVAALYKFGVAEPRKKAYADFYK) form a helical membrane-spanning segment. Over 55 to 75 (NYSAEKDFEEMKKAGLFRSIK) the chain is Mitochondrial intermembrane.

Belongs to the cytochrome c oxidase subunit 6c family. Component of the cytochrome c oxidase (complex IV, CIV), a multisubunit enzyme composed of 14 subunits. The complex is composed of a catalytic core of 3 subunits MT-CO1, MT-CO2 and MT-CO3, encoded in the mitochondrial DNA, and 11 supernumerary subunits COX4I, COX5A, COX5B, COX6A, COX6B, COX6C, COX7A, COX7B, COX7C, COX8 and NDUFA4, which are encoded in the nuclear genome. The complex exists as a monomer or a dimer and forms supercomplexes (SCs) in the inner mitochondrial membrane with NADH-ubiquinone oxidoreductase (complex I, CI) and ubiquinol-cytochrome c oxidoreductase (cytochrome b-c1 complex, complex III, CIII), resulting in different assemblies (supercomplex SCI(1)III(2)IV(1) and megacomplex MCI(2)III(2)IV(2)).

The protein resides in the mitochondrion inner membrane. It functions in the pathway energy metabolism; oxidative phosphorylation. Functionally, component of the cytochrome c oxidase, the last enzyme in the mitochondrial electron transport chain which drives oxidative phosphorylation. The respiratory chain contains 3 multisubunit complexes succinate dehydrogenase (complex II, CII), ubiquinol-cytochrome c oxidoreductase (cytochrome b-c1 complex, complex III, CIII) and cytochrome c oxidase (complex IV, CIV), that cooperate to transfer electrons derived from NADH and succinate to molecular oxygen, creating an electrochemical gradient over the inner membrane that drives transmembrane transport and the ATP synthase. Cytochrome c oxidase is the component of the respiratory chain that catalyzes the reduction of oxygen to water. Electrons originating from reduced cytochrome c in the intermembrane space (IMS) are transferred via the dinuclear copper A center (CU(A)) of subunit 2 and heme A of subunit 1 to the active site in subunit 1, a binuclear center (BNC) formed by heme A3 and copper B (CU(B)). The BNC reduces molecular oxygen to 2 water molecules using 4 electrons from cytochrome c in the IMS and 4 protons from the mitochondrial matrix. The chain is Cytochrome c oxidase subunit 6C (COX6C) from Plecturocebus donacophilus (Bolivian gray titi monkey).